Here is a 129-residue protein sequence, read N- to C-terminus: Transmembrane protein 105 (129 aa).

2 consecutive transmembrane segments (helical) span residues 23-43 (AGNVIGQLIYLLTWSLFTAWL) and 94-114 (FLAGGLHLVPSSLSLAACGVV).

Its subcellular location is the membrane. This chain is Transmembrane protein 105 (TMEM105), found in Homo sapiens (Human).